Here is a 242-residue protein sequence, read N- to C-terminus: Orotidine 5'-phosphate decarboxylase (242 aa).

Substrate is bound by residues Asp-16, Lys-37, Asp-64 to Thr-73, Thr-128, Arg-190, Gln-199, Gly-219, and Arg-220. Lys-66 acts as the Proton donor in catalysis.

The protein belongs to the OMP decarboxylase family. Type 1 subfamily. In terms of assembly, homodimer.

The catalysed reaction is orotidine 5'-phosphate + H(+) = UMP + CO2. It participates in pyrimidine metabolism; UMP biosynthesis via de novo pathway; UMP from orotate: step 2/2. Catalyzes the decarboxylation of orotidine 5'-monophosphate (OMP) to uridine 5'-monophosphate (UMP). This Prochlorococcus marinus (strain MIT 9215) protein is Orotidine 5'-phosphate decarboxylase.